The chain runs to 88 residues: Elongation factor 1-beta (88 aa).

It belongs to the EF-1-beta/EF-1-delta family.

In terms of biological role, promotes the exchange of GDP for GTP in EF-1-alpha/GDP, thus allowing the regeneration of EF-1-alpha/GTP that could then be used to form the ternary complex EF-1-alpha/GTP/AAtRNA. The chain is Elongation factor 1-beta from Methanosphaera stadtmanae (strain ATCC 43021 / DSM 3091 / JCM 11832 / MCB-3).